The sequence spans 214 residues: A-type ATP synthase subunit D (214 aa).

This sequence belongs to the V-ATPase D subunit family. In terms of assembly, has multiple subunits with at least A(3), B(3), C, D, E, F, H, I and proteolipid K(x).

The protein resides in the cell membrane. Its function is as follows. Component of the A-type ATP synthase that produces ATP from ADP in the presence of a proton gradient across the membrane. This chain is A-type ATP synthase subunit D, found in Methanosphaera stadtmanae (strain ATCC 43021 / DSM 3091 / JCM 11832 / MCB-3).